The sequence spans 375 residues: Phytanoyl-CoA hydroxylase-interacting protein-like (375 aa).

Phosphoserine occurs at positions 11, 12, and 15. Asparagine 22 is a glycosylation site (N-linked (GlcNAc...) asparagine). A Phosphoserine modification is found at serine 24. A glycan (N-linked (GlcNAc...) asparagine) is linked at asparagine 36. Residues 51 to 160 (VPHNIKINNI…EIIEFCTADY (110 aa)) enclose the Fibronectin type-III domain.

Belongs to the PHYHIP family.

Its function is as follows. May play a role in the development of the central system. This is Phytanoyl-CoA hydroxylase-interacting protein-like (Phyhipl) from Mus musculus (Mouse).